Consider the following 298-residue polypeptide: Tyrosine recombinase XerC (298 aa).

The Core-binding (CB) domain maps to Met-1–Met-84. The Tyr recombinase domain maps to Tyr-105 to Leu-286. Residues Arg-145, Lys-169, His-238, Arg-241, and His-264 contribute to the active site. Tyr-273 functions as the O-(3'-phospho-DNA)-tyrosine intermediate in the catalytic mechanism.

This sequence belongs to the 'phage' integrase family. XerC subfamily. Forms a cyclic heterotetrameric complex composed of two molecules of XerC and two molecules of XerD.

It is found in the cytoplasm. Site-specific tyrosine recombinase, which acts by catalyzing the cutting and rejoining of the recombining DNA molecules. The XerC-XerD complex is essential to convert dimers of the bacterial chromosome into monomers to permit their segregation at cell division. It also contributes to the segregational stability of plasmids. In Staphylococcus aureus (strain MSSA476), this protein is Tyrosine recombinase XerC.